Here is a 128-residue protein sequence, read N- to C-terminus: ATP synthase epsilon chain (128 aa).

The tract at residues 98-128 is disordered; the sequence is EALDMPSSTPEQAQIKDAAVRRARGQLRASR. A compositionally biased stretch (basic residues) spans 118–128; it reads RRARGQLRASR.

It belongs to the ATPase epsilon chain family. F-type ATPases have 2 components, CF(1) - the catalytic core - and CF(0) - the membrane proton channel. CF(1) has five subunits: alpha(3), beta(3), gamma(1), delta(1), epsilon(1). CF(0) has three main subunits: a, b and c.

The protein localises to the cell inner membrane. In terms of biological role, produces ATP from ADP in the presence of a proton gradient across the membrane. This chain is ATP synthase epsilon chain, found in Rhodopirellula baltica (strain DSM 10527 / NCIMB 13988 / SH1).